An 859-amino-acid chain; its full sequence is ATP-dependent RNA helicase DDX24 (859 aa).

Lys17 carries the N6-acetyllysine modification. Position 60 is a phosphoserine (Ser60). The segment at 61-170 is disordered; that stretch reads PAKNPSSLFS…KGLEPSQSTA (110 aa). Position 71 is an N6-acetyllysine (Lys71). 2 positions are modified to phosphoserine: Ser82 and Ser94. A compositionally biased stretch (basic residues) spans 94–105; the sequence is SPKKKIKLKKSK. Over residues 106–115 the composition is skewed to polar residues; sequence NVATEGTSTQ. The segment covering 125–139 has biased composition (acidic residues); that stretch reads LEAQGDDMVCDDPEA. Residues 192–220 carry the Q motif motif; the sequence is SAWKDLFVPRPVLRALSFLGFSAPTPIQA. The Helicase ATP-binding domain maps to 224–528; the sequence is APAIRDKLDI…RILHKKHTKK (305 aa). Residue 237-244 coordinates ATP; the sequence is AETGSGKT. Residues 262–300 form a disordered region; sequence NAAPPPSNTEAPPGETRTEAGAETRSPGKAEAESDALPD. Over residues 277–293 the composition is skewed to basic and acidic residues; the sequence is TRTEAGAETRSPGKAEA. Phosphoserine is present on residues Ser287 and Ser295. Thr302 is modified (phosphothreonine). Residues 326 to 376 form a disordered region; the sequence is SDQALLFGDDDAGEGPSSLIREKPVPKQNENEEENLDKEQTGNLKQELDDK. Lys370 is covalently cross-linked (Glycyl lysine isopeptide (Lys-Gly) (interchain with G-Cter in SUMO2)). Residues 471–474 carry the DEAD box motif; that stretch reads DEAD. The region spanning 578-723 is the Helicase C-terminal domain; it reads YLYYFLMQYP…LFPVQTKYMD (146 aa). Residues Lys624, Lys808, and Lys825 each participate in a glycyl lysine isopeptide (Lys-Gly) (interchain with G-Cter in SUMO2) cross-link. 2 stretches are compositionally biased toward polar residues: residues 799 to 814 and 823 to 833; these read PLFT…TQSG and PSKSESALSCL. Positions 799–859 are disordered; sequence PLFTESQKTK…EQPQPSTSAN (61 aa).

This sequence belongs to the DEAD box helicase family. DDX24/MAK5 subfamily. Interacts with FADD. Interacts with RIPK1; this interaction disrupts RLR signaling activation of IFN-dependent transcription factor IRF7. Interacts with NIP7. Interacts with EP300; this interaction prevents TP53 acetylation mediated by EP300. As to quaternary structure, (Microbial infection) Interacts with HIV-1 virus Gag and Rev proteins. In terms of processing, ubiquitinated by MDM2 without targeting DDX24 for proteasomal degradation. Instead, polyubiquitinated DDX24 promotes interaction with NIP7, a component of pre-rRNP processing complex, and associates with pre-rRNA molecules and pre-ribosomal particles. As to expression, ubiquitous. Most abundant in heart and brain, but with lowest levels in thymus and small intestine.

Its subcellular location is the cytoplasm. It is found in the nucleus. It catalyses the reaction ATP + H2O = ADP + phosphate + H(+). Its function is as follows. ATP-dependent RNA helicase that plays a role in various aspects of RNA metabolism including pre-mRNA splicing and is thereby involved in different biological processes such as cell cycle regulation or innate immunity. Plays an inhibitory role in TP53 transcriptional activity and subsequently in TP53 controlled cell growth arrest and senescence by inhibiting its EP300 mediated acetylation. Negatively regulates cytosolic RNA-mediated innate immune signaling at least in part by affecting RIPK1/IRF7 interactions. Alternatively, possesses antiviral activity by recognizing gammaherpesvirus transcripts in the context of lytic reactivation. Plays an essential role in cell cycle regulation in vascular smooth muscle cells by interacting with and regulating FANCA (Fanconi anemia complementation group A) mRNA. Functionally, (Microbial infection) Plays a positive role in HIV-1 infection by promoting Rev-dependent nuclear export of viral RNAs and their packaging into virus particles. In Homo sapiens (Human), this protein is ATP-dependent RNA helicase DDX24 (DDX24).